We begin with the raw amino-acid sequence, 220 residues long: MKLNKYIDHTLLKQDAKKKQIDSLLSEAREYDFASVCVNPTWVEHAKKGLEGTDVKVCTVVGFPLGATTSAVKAFETKEAIQNGADEIDMVINVGALKSGNLALVESDIRAVVEASGDKLVKVIIEACLLTDQEKIVVCQLAQKAGADFVKTSTGFSTGGATIADVRLMRETVGSDMGVKAAGGARSYADALAFVEAGATRIGTSAGVAILKGELADGDY.

D89 acts as the Proton donor/acceptor in catalysis. Catalysis depends on K151, which acts as the Schiff-base intermediate with acetaldehyde. The Proton donor/acceptor role is filled by K180.

Belongs to the DeoC/FbaB aldolase family. DeoC type 1 subfamily.

The protein resides in the cytoplasm. The catalysed reaction is 2-deoxy-D-ribose 5-phosphate = D-glyceraldehyde 3-phosphate + acetaldehyde. It functions in the pathway carbohydrate degradation; 2-deoxy-D-ribose 1-phosphate degradation; D-glyceraldehyde 3-phosphate and acetaldehyde from 2-deoxy-alpha-D-ribose 1-phosphate: step 2/2. Functionally, catalyzes a reversible aldol reaction between acetaldehyde and D-glyceraldehyde 3-phosphate to generate 2-deoxy-D-ribose 5-phosphate. This is Deoxyribose-phosphate aldolase from Streptococcus pneumoniae (strain Taiwan19F-14).